Here is a 161-residue protein sequence, read N- to C-terminus: Regulator of ribonuclease activity A (161 aa).

Belongs to the RraA family. Homotrimer. Binds to both RNA-binding sites in the C-terminal region of Rne and to RhlB.

The protein resides in the cytoplasm. Functionally, globally modulates RNA abundance by binding to RNase E (Rne) and regulating its endonucleolytic activity. Can modulate Rne action in a substrate-dependent manner by altering the composition of the degradosome. Modulates RNA-binding and helicase activities of the degradosome. This Pseudoalteromonas atlantica (strain T6c / ATCC BAA-1087) protein is Regulator of ribonuclease activity A.